Consider the following 385-residue polypeptide: S-adenosylmethionine synthase (385 aa).

An ATP-binding site is contributed by His15. Residue Asp17 coordinates Mg(2+). Glu43 contributes to the K(+) binding site. 2 residues coordinate L-methionine: Glu56 and Gln99. The segment at 99–109 (QSPDINQGVDR) is flexible loop. ATP contacts are provided by residues 164 to 166 (DAK), 230 to 231 (RF), Asp239, 245 to 246 (RK), Ala262, and Lys266. Asp239 provides a ligand contact to L-methionine. An L-methionine-binding site is contributed by Lys270.

Belongs to the AdoMet synthase family. Homotetramer; dimer of dimers. It depends on Mg(2+) as a cofactor. K(+) is required as a cofactor.

Its subcellular location is the cytoplasm. It catalyses the reaction L-methionine + ATP + H2O = S-adenosyl-L-methionine + phosphate + diphosphate. It functions in the pathway amino-acid biosynthesis; S-adenosyl-L-methionine biosynthesis; S-adenosyl-L-methionine from L-methionine: step 1/1. Functionally, catalyzes the formation of S-adenosylmethionine (AdoMet) from methionine and ATP. The overall synthetic reaction is composed of two sequential steps, AdoMet formation and the subsequent tripolyphosphate hydrolysis which occurs prior to release of AdoMet from the enzyme. The polypeptide is S-adenosylmethionine synthase (Hamiltonella defensa subsp. Acyrthosiphon pisum (strain 5AT)).